We begin with the raw amino-acid sequence, 343 residues long: CRISPR-associated endonuclease Cas1 1 (343 aa).

Residues Glu-166, His-234, and Glu-249 each coordinate Mn(2+).

It belongs to the CRISPR-associated endonuclease Cas1 family. Homodimer, forms a heterotetramer with a Cas2 homodimer. Mg(2+) serves as cofactor. The cofactor is Mn(2+).

Functionally, CRISPR (clustered regularly interspaced short palindromic repeat), is an adaptive immune system that provides protection against mobile genetic elements (viruses, transposable elements and conjugative plasmids). CRISPR clusters contain spacers, sequences complementary to antecedent mobile elements, and target invading nucleic acids. CRISPR clusters are transcribed and processed into CRISPR RNA (crRNA). Acts as a dsDNA endonuclease. Involved in the integration of spacer DNA into the CRISPR cassette. This is CRISPR-associated endonuclease Cas1 1 from Moorella thermoacetica (strain ATCC 39073 / JCM 9320).